A 503-amino-acid polypeptide reads, in one-letter code: Probable cytosol aminopeptidase (503 aa).

Lys-270 and Asp-275 together coordinate Mn(2+). Residue Lys-282 is part of the active site. Residues Asp-293, Asp-352, and Glu-354 each coordinate Mn(2+). Arg-356 is a catalytic residue.

This sequence belongs to the peptidase M17 family. Mn(2+) serves as cofactor.

It is found in the cytoplasm. The enzyme catalyses Release of an N-terminal amino acid, Xaa-|-Yaa-, in which Xaa is preferably Leu, but may be other amino acids including Pro although not Arg or Lys, and Yaa may be Pro. Amino acid amides and methyl esters are also readily hydrolyzed, but rates on arylamides are exceedingly low.. The catalysed reaction is Release of an N-terminal amino acid, preferentially leucine, but not glutamic or aspartic acids.. Functionally, presumably involved in the processing and regular turnover of intracellular proteins. Catalyzes the removal of unsubstituted N-terminal amino acids from various peptides. This Sodalis glossinidius (strain morsitans) protein is Probable cytosol aminopeptidase.